Here is a 308-residue protein sequence, read N- to C-terminus: Apolipoprotein F (308 aa).

Belongs to the apolipoprotein F family.

The protein resides in the secreted. Minor apolipoprotein that associates with LDL. Inhibits cholesteryl ester transfer protein (CETP) activity and appears to be an important regulator of cholesterol transport. Also associates to a lesser degree with VLDL, Apo-AI and Apo-AII. The sequence is that of Apolipoprotein F (Apof) from Rattus norvegicus (Rat).